The sequence spans 747 residues: E3 UFM1-protein ligase 1 homolog (747 aa).

Residues 403–468 are disordered; that stretch reads EKKKQCGSKA…GTVQVNSEEL (66 aa). The segment covering 429-438 has biased composition (basic residues); that stretch reads GGKGGKKGGK. Over residues 439 to 449 the composition is skewed to gly residues; that stretch reads GGKNGGGGGKG. Positions 450-465 are enriched in polar residues; sequence ATSSVPTGSGTVQVNS.

The protein belongs to the UFL1 family.

In terms of biological role, E3 UFM1-protein ligase that mediates ufmylation of target proteins. This Caenorhabditis briggsae protein is E3 UFM1-protein ligase 1 homolog (ufl-1).